Consider the following 308-residue polypeptide: Aspartate carbamoyltransferase catalytic subunit (308 aa).

Carbamoyl phosphate is bound by residues Arg58 and Thr59. Lys86 contacts L-aspartate. Residues Arg108, His136, and Gln139 each contribute to the carbamoyl phosphate site. Positions 169 and 227 each coordinate L-aspartate. The carbamoyl phosphate site is built by Gly268 and Pro269.

The protein belongs to the aspartate/ornithine carbamoyltransferase superfamily. ATCase family. As to quaternary structure, heterododecamer (2C3:3R2) of six catalytic PyrB chains organized as two trimers (C3), and six regulatory PyrI chains organized as three dimers (R2).

It catalyses the reaction carbamoyl phosphate + L-aspartate = N-carbamoyl-L-aspartate + phosphate + H(+). Its pathway is pyrimidine metabolism; UMP biosynthesis via de novo pathway; (S)-dihydroorotate from bicarbonate: step 2/3. In terms of biological role, catalyzes the condensation of carbamoyl phosphate and aspartate to form carbamoyl aspartate and inorganic phosphate, the committed step in the de novo pyrimidine nucleotide biosynthesis pathway. The chain is Aspartate carbamoyltransferase catalytic subunit from Chloroflexus aurantiacus (strain ATCC 29366 / DSM 635 / J-10-fl).